Here is a 545-residue protein sequence, read N- to C-terminus: MAAKDVVFGGEARARMVEGVNILANAVKVTLGPKGRNVVLERSFGAPTVTKDGVSVAKEIELKDKLQNMGAQLVKEVASKTSDNAGDGTTTATVLAQAIVREGSKYVAAGLNPMDLKRGIDKAVTALVAELKKASKATTTSKEIAQVGSISANSDESIGKIIADAMDKVGKEGVITVEDGKSLDNELDVVEGMQFDRGYLSPYFINNPEKQAALLDNPFVLLFDKKISNIRDLLPTLEQVAKAGRPLLIIAEEVEGEALATLVVNTIRGILKVVAVKAPGFGDRRKAMLEDIAILTGGKVIAEEVGLTLEKVTLADLGQAKRIEVGKENTTIIDGAGAAADIEARVKQIRIQIEEATSDYDREKLQERVAKLAGGVAVIKVGAATEVEMKEKKARVEDALHATRAAVEEGIVAGGGVALLRAKQAAGDIKGDNPDQDAGIKLILKAIEAPLREIVANAGGEPSVVVNAVLNGKGNYGFNAANDTYGDMLEMGILDPTKVTRTALQNAASVASLLLTTEAMVAEAPKDDAPAPAMPDMGGMGGMGM.

ATP-binding positions include 30-33, lysine 51, 87-91, glycine 415, 479-481, and aspartate 495; these read TLGP, DGTTT, and NAA. A disordered region spans residues 526-545; that stretch reads KDDAPAPAMPDMGGMGGMGM.

It belongs to the chaperonin (HSP60) family. Forms a cylinder of 14 subunits composed of two heptameric rings stacked back-to-back. Interacts with the co-chaperonin GroES.

Its subcellular location is the cytoplasm. It catalyses the reaction ATP + H2O + a folded polypeptide = ADP + phosphate + an unfolded polypeptide.. In terms of biological role, together with its co-chaperonin GroES, plays an essential role in assisting protein folding. The GroEL-GroES system forms a nano-cage that allows encapsulation of the non-native substrate proteins and provides a physical environment optimized to promote and accelerate protein folding. This chain is Chaperonin GroEL, found in Paracidovorax citrulli (strain AAC00-1) (Acidovorax citrulli).